We begin with the raw amino-acid sequence, 30 residues long: Putative UPF0377 protein YNR075C-A (30 aa).

The protein belongs to the UPF0377 family.

This is Putative UPF0377 protein YNR075C-A from Saccharomyces cerevisiae (strain ATCC 204508 / S288c) (Baker's yeast).